A 254-amino-acid polypeptide reads, in one-letter code: 5-oxoprolinase subunit A (254 aa).

The protein belongs to the LamB/PxpA family. Forms a complex composed of PxpA, PxpB and PxpC.

It carries out the reaction 5-oxo-L-proline + ATP + 2 H2O = L-glutamate + ADP + phosphate + H(+). In terms of biological role, catalyzes the cleavage of 5-oxoproline to form L-glutamate coupled to the hydrolysis of ATP to ADP and inorganic phosphate. The chain is 5-oxoprolinase subunit A from Gluconobacter oxydans (strain 621H) (Gluconobacter suboxydans).